The following is a 101-amino-acid chain: MAETTKATAAEPAADEALVRGYRKARRGYVVSDKMDKTIVVEVEDRVKHPLYGKVLRRTSKVKAHDESNVAGIGDLVLINETRPLSASKRWRLVEILEKAK.

Belongs to the universal ribosomal protein uS17 family. As to quaternary structure, part of the 30S ribosomal subunit.

Functionally, one of the primary rRNA binding proteins, it binds specifically to the 5'-end of 16S ribosomal RNA. In Leifsonia xyli subsp. xyli (strain CTCB07), this protein is Small ribosomal subunit protein uS17.